Here is a 358-residue protein sequence, read N- to C-terminus: 2'-5'-oligoadenylate synthase 1A (358 aa).

The tract at residues 14-61 (DKFIEVYLLPNTSFRDDVKSAINVLCDFLKERCFRDTVHPVRVSKVVK) is interaction with dsRNA. An ATP-binding site is contributed by serine 64. Residues aspartate 76, aspartate 78, and aspartate 149 each coordinate Mg(2+). Positions 201 to 211 (QRPTKLKSLIR) are interaction with dsRNA. Positions 211, 214, and 231 each coordinate ATP.

The protein belongs to the 2-5A synthase family. As to quaternary structure, monomer. Homotetramer. Interacts with OAS1D. It depends on Mg(2+) as a cofactor.

It localises to the cytoplasm. The protein resides in the mitochondrion. Its subcellular location is the nucleus. It is found in the microsome. The protein localises to the endoplasmic reticulum. The enzyme catalyses 3 ATP = 5'-triphosphoadenylyl-(2'-&gt;5')-adenylyl-(2'-&gt;5')-adenosine + 2 diphosphate. Produced as a latent enzyme which is activated by dsRNA generated during the course of viral infection. The dsRNA activator must be at least 15 nucleotides long, and no modification of the 2'-hydroxyl group is tolerated. ssRNA or dsDNA do not act as activators. Interferon-induced, dsRNA-activated antiviral enzyme which plays a critical role in cellular innate antiviral response. In addition, it may also play a role in other cellular processes such as apoptosis, cell growth, differentiation and gene regulation. Synthesizes higher oligomers of 2'-5'-oligoadenylates (2-5A) from ATP which then bind to the inactive monomeric form of ribonuclease L (RNase L) leading to its dimerization and subsequent activation. Activation of RNase L leads to degradation of cellular as well as viral RNA, resulting in the inhibition of protein synthesis, thus terminating viral replication. Can mediate the antiviral effect via the classical RNase L-dependent pathway or an alternative antiviral pathway independent of RNase L. The chain is 2'-5'-oligoadenylate synthase 1A (Oas1a) from Rattus norvegicus (Rat).